The chain runs to 335 residues: Adenosine deaminase (335 aa).

Residues H12 and H14 each coordinate Zn(2+). Residues H14 and D16 each contribute to the substrate site. Residue H197 coordinates Zn(2+). Residue E200 is the Proton donor of the active site. Position 278 (D278) interacts with Zn(2+).

This sequence belongs to the metallo-dependent hydrolases superfamily. Adenosine and AMP deaminases family. Adenosine deaminase subfamily. The cofactor is Zn(2+).

It carries out the reaction adenosine + H2O + H(+) = inosine + NH4(+). It catalyses the reaction 2'-deoxyadenosine + H2O + H(+) = 2'-deoxyinosine + NH4(+). In terms of biological role, catalyzes the hydrolytic deamination of adenosine and 2-deoxyadenosine. This Clostridium botulinum (strain Loch Maree / Type A3) protein is Adenosine deaminase.